Reading from the N-terminus, the 315-residue chain is tRNA dimethylallyltransferase (315 aa).

Glycine 13–threonine 20 contacts ATP. Residue threonine 15 to threonine 20 coordinates substrate. Interaction with substrate tRNA stretches follow at residues aspartate 38 to leucine 41, glutamine 162 to arginine 166, arginine 243 to arginine 248, and lysine 276 to arginine 283.

This sequence belongs to the IPP transferase family. Monomer. Requires Mg(2+) as cofactor.

The enzyme catalyses adenosine(37) in tRNA + dimethylallyl diphosphate = N(6)-dimethylallyladenosine(37) in tRNA + diphosphate. Functionally, catalyzes the transfer of a dimethylallyl group onto the adenine at position 37 in tRNAs that read codons beginning with uridine, leading to the formation of N6-(dimethylallyl)adenosine (i(6)A). In Vibrio cholerae serotype O1 (strain ATCC 39541 / Classical Ogawa 395 / O395), this protein is tRNA dimethylallyltransferase.